Reading from the N-terminus, the 357-residue chain is DNA replication and repair protein RecF (357 aa).

30–37 (GANGSGKT) is an ATP binding site.

The protein belongs to the RecF family.

It localises to the cytoplasm. In terms of biological role, the RecF protein is involved in DNA metabolism; it is required for DNA replication and normal SOS inducibility. RecF binds preferentially to single-stranded, linear DNA. It also seems to bind ATP. This chain is DNA replication and repair protein RecF, found in Escherichia fergusonii (strain ATCC 35469 / DSM 13698 / CCUG 18766 / IAM 14443 / JCM 21226 / LMG 7866 / NBRC 102419 / NCTC 12128 / CDC 0568-73).